Here is a 390-residue protein sequence, read N- to C-terminus: Dual-specificity RNA methyltransferase RlmN (390 aa).

Glutamate 110 functions as the Proton acceptor in the catalytic mechanism. The 240-residue stretch at 116–355 (EADRATLCVS…VIIRKTRGDD (240 aa)) folds into the Radical SAM core domain. Cysteine 123 and cysteine 360 form a disulfide bridge. The [4Fe-4S] cluster site is built by cysteine 130, cysteine 134, and cysteine 137. S-adenosyl-L-methionine contacts are provided by residues 184 to 185 (GE), serine 216, 238 to 240 (SLH), and asparagine 317. Cysteine 360 functions as the S-methylcysteine intermediate in the catalytic mechanism.

It belongs to the radical SAM superfamily. RlmN family. It depends on [4Fe-4S] cluster as a cofactor.

It is found in the cytoplasm. The enzyme catalyses adenosine(2503) in 23S rRNA + 2 reduced [2Fe-2S]-[ferredoxin] + 2 S-adenosyl-L-methionine = 2-methyladenosine(2503) in 23S rRNA + 5'-deoxyadenosine + L-methionine + 2 oxidized [2Fe-2S]-[ferredoxin] + S-adenosyl-L-homocysteine. It carries out the reaction adenosine(37) in tRNA + 2 reduced [2Fe-2S]-[ferredoxin] + 2 S-adenosyl-L-methionine = 2-methyladenosine(37) in tRNA + 5'-deoxyadenosine + L-methionine + 2 oxidized [2Fe-2S]-[ferredoxin] + S-adenosyl-L-homocysteine. Functionally, specifically methylates position 2 of adenine 2503 in 23S rRNA and position 2 of adenine 37 in tRNAs. m2A2503 modification seems to play a crucial role in the proofreading step occurring at the peptidyl transferase center and thus would serve to optimize ribosomal fidelity. In Haemophilus influenzae (strain 86-028NP), this protein is Dual-specificity RNA methyltransferase RlmN.